Reading from the N-terminus, the 262-residue chain is Ribosome biogenesis GTPase A (262 aa).

One can recognise a CP-type G domain in the interval 12–157 (KRQIKDLLRL…ILDTPGILYK (146 aa)). GTP-binding positions include 54 to 57 (NKVD), 109 to 114 (NTGKST), and Gly153.

This sequence belongs to the TRAFAC class YlqF/YawG GTPase family. MTG1 subfamily.

Its subcellular location is the cytoplasm. Its function is as follows. Required for a late step of 50S ribosomal subunit assembly. Has GTPase activity. Binds to the 23S rRNA. This Thermotoga maritima (strain ATCC 43589 / DSM 3109 / JCM 10099 / NBRC 100826 / MSB8) protein is Ribosome biogenesis GTPase A.